A 127-amino-acid chain; its full sequence is Tyrosine-protein phosphatase 2 (127 aa).

The region spanning Gln-1–Val-127 is the Tyrosine-protein phosphatase domain. Over residues Val-63–Pro-81 the composition is skewed to acidic residues. Positions Val-63–Glu-82 are disordered.

Belongs to the protein-tyrosine phosphatase family.

The catalysed reaction is O-phospho-L-tyrosyl-[protein] + H2O = L-tyrosyl-[protein] + phosphate. In Styela plicata (Wrinkled sea squirt), this protein is Tyrosine-protein phosphatase 2 (STY-2).